The chain runs to 745 residues: Cullin-2 (745 aa).

Lys393 carries the post-translational modification N6-acetyllysine. Phosphothreonine is present on Thr661. The 61-residue stretch at 675–735 (DRKMYLQAAI…IDKQYIERSQ (61 aa)) folds into the Cullin neddylation domain. A Glycyl lysine isopeptide (Lys-Gly) (interchain with G-Cter in NEDD8) cross-link involves residue Lys689.

Belongs to the cullin family. As to quaternary structure, component of multiple Cul2-RING (CRL2) E3 ubiquitin-protein ligase complexes consisting of CUL2, Elongin BC (ELOB and ELOC), RBX1 and a variable substrate-specific adapter; this complex is also known as ECS (Elongin BC-CUL2/5-SOCS-box protein) complex and may consist of CUL2 or CUL5. Component of the ECS(VHL) or CBC(VHL) complex containing CUL2, RBX1, ELOB, ELOC and VHL. Component of the ECS(MED8) complex with the probable substrate recognition component MED8. Component of multiple ECS complexes part of the DesCEND (destruction via C-end degrons) pathway, which contain either KLHDC2, KLHDC3, KLHDC10, APPBP2, FEM1A, FEM1B or FEM1C as substrate-recognition component. Component of the ECS(LRR1) complex with the substrate recognition component LRR1. Component of a CRL2(FEM1B) complex containing CUL2, RBX1, ELOB, ELOC and FEM1B. Component of a CRL2(FEM1C) complex containing CUL2, RBX1, ELOB, ELOC and FEM1C. Part of an E3 ubiquitin-protein ligase complex including ZYG11B, CUL2 and Elongin BC. Part of an E3 ubiquitin-protein ligase complex including ZER1, CUL2 and Elongin BC. Interacts with RBX1, RNF7, FEM1B and TIP120A/CAND1. Found in a complex composed of LIMD1, VHL, EGLN1/PHD2, ELOB and CUL2. Interacts (when neddylated) with ARIH1; leading to activate the E3 ligase activity of ARIH1. Interacts (unneddylated form) with DCUN1D1, DCUN1D2, DCUN1D3, DCUN1D4 and DCUN1D5; these interactions promote the cullin neddylation. Component of VCB (elongins BC/CUL2/VHL) complex that contains at least DCUN1D1, CUL2 and VHL; this complex triggers CUL2 neddylation and consequently cullin ring ligase (CRL) substrates polyubiquitylation. In terms of processing, neddylated; which enhances the ubiquitination activity of ECS (Elongin BC-CUL2/5-SOCS-box protein) E3 ubiquitin-protein ligase complexes. Neddylation leads to structural rearrangment in the complex that allows interaction between the E2 ubiquitin-conjugating enzyme and the acceptor ubiquitin. CBC(VHL) complex formation seems to promote neddylation. Deneddylated via its interaction with the COP9 signalosome (CSN) complex.

The protein localises to the nucleus. Its pathway is protein modification; protein ubiquitination. Functionally, core component of multiple cullin-RING-based ECS (ElonginB/C-CUL2/5-SOCS-box protein) E3 ubiquitin-protein ligase complexes, which mediate the ubiquitination of target proteins. CUL2 may serve as a rigid scaffold in the complex and may contribute to catalysis through positioning of the substrate and the ubiquitin-conjugating enzyme. The E3 ubiquitin-protein ligase activity of the complex is dependent on the neddylation of the cullin subunit and is inhibited by the association of the deneddylated cullin subunit with TIP120A/CAND1. The functional specificity of the ECS complex depends on the substrate recognition component. ECS(VHL) mediates the ubiquitination of hypoxia-inducible factor (HIF). A number of ECS complexes (containing either KLHDC2, KLHDC3, KLHDC10, APPBP2, FEM1A, FEM1B or FEM1C as substrate-recognition component) are part of the DesCEND (destruction via C-end degrons) pathway, which recognizes a C-degron located at the extreme C terminus of target proteins, leading to their ubiquitination and degradation. ECS complexes and ARIH1 collaborate in tandem to mediate ubiquitination of target proteins. ECS(LRR1) ubiquitinates MCM7 and promotes CMG replisome disassembly by VCP and chromatin extraction during S-phase. In Pongo abelii (Sumatran orangutan), this protein is Cullin-2 (CUL2).